Reading from the N-terminus, the 215-residue chain is Peptide methionine sulfoxide reductase MsrA (215 aa).

Residue Cys-58 is part of the active site.

It belongs to the MsrA Met sulfoxide reductase family.

The enzyme catalyses L-methionyl-[protein] + [thioredoxin]-disulfide + H2O = L-methionyl-(S)-S-oxide-[protein] + [thioredoxin]-dithiol. The catalysed reaction is [thioredoxin]-disulfide + L-methionine + H2O = L-methionine (S)-S-oxide + [thioredoxin]-dithiol. Its function is as follows. Has an important function as a repair enzyme for proteins that have been inactivated by oxidation. Catalyzes the reversible oxidation-reduction of methionine sulfoxide in proteins to methionine. The sequence is that of Peptide methionine sulfoxide reductase MsrA from Pseudomonas aeruginosa (strain LESB58).